The following is a 209-amino-acid chain: Protein lin-28 homolog A (209 aa).

The tract at residues 1 to 31 (MGSVSNQQFAGGCAKAAEEAPEEAPEDAARA) is disordered. Gly-2 carries the N-acetylglycine modification. Residue Ser-3 is modified to Phosphoserine. The region spanning 39–112 (HGAGICKWFN…GLESIRVTGP (74 aa)) is the CSD domain. Residues 113–136 (GGVFCIGSERRPKGKSMQKRRSKG) form a flexible linker region. Ser-120 is modified (phosphoserine). 2 consecutive CCHC-type zinc fingers follow at residues 137–154 (DRCY…ECKL) and 159–176 (KKCH…SCPL). A disordered region spans residues 178–209 (AQQGPSAQGKPTYFREEEEEIHSPTLLPEAQN). Phosphoserine is present on Ser-200.

This sequence belongs to the lin-28 family. In terms of assembly, monomer. During skeletal muscle differentiation, associated with translation initiation complexes in the polysomal compartment. Directly interacts with EIF3S2. Interacts with NCL in an RNA-dependent manner. Interacts (via C-terminus) with DHX9 (via N- and C-terminus); this interaction occurs in a RNA-independent manner. Interacts with TUT4 in the presence of pre-let-7 RNA. As to expression, expressed in embryonic stem cells, placenta and testis. Tends to be up-regulated in HER2-overexpressing breast tumors.

The protein localises to the cytoplasm. It localises to the rough endoplasmic reticulum. Its subcellular location is the P-body. It is found in the stress granule. The protein resides in the nucleus. The protein localises to the nucleolus. Its function is as follows. RNA-binding protein that inhibits processing of pre-let-7 miRNAs and regulates translation of mRNAs that control developmental timing, pluripotency and metabolism. Seems to recognize a common structural G-quartet (G4) feature in its miRNA and mRNA targets. 'Translational enhancer' that drives specific mRNAs to polysomes and increases the efficiency of protein synthesis. Its association with the translational machinery and target mRNAs results in an increased number of initiation events per molecule of mRNA and, indirectly, in mRNA stabilization. Binds IGF2 mRNA, MYOD1 mRNA, ARBP/36B4 ribosomal protein mRNA and its own mRNA. Essential for skeletal muscle differentiation program through the translational up-regulation of IGF2 expression. Suppressor of microRNA (miRNA) biogenesis, including that of let-7, miR107, miR-143 and miR-200c. Specifically binds the miRNA precursors (pre-miRNAs), recognizing an 5'-GGAG-3' motif found in pre-miRNA terminal loop, and recruits TUT4 and TUT7 uridylyltransferases. This results in the terminal uridylation of target pre-miRNAs. Uridylated pre-miRNAs fail to be processed by Dicer and undergo degradation. The repression of let-7 expression is required for normal development and contributes to maintain the pluripotent state by preventing let-7-mediated differentiation of embryonic stem cells. Localized to the periendoplasmic reticulum area, binds to a large number of spliced mRNAs and inhibits the translation of mRNAs destined for the ER, reducing the synthesis of transmembrane proteins, ER or Golgi lumen proteins, and secretory proteins. Binds to and enhances the translation of mRNAs for several metabolic enzymes, such as PFKP, PDHA1 or SDHA, increasing glycolysis and oxidative phosphorylation. Which, with the let-7 repression may enhance tissue repair in adult tissue. This chain is Protein lin-28 homolog A (LIN28A), found in Homo sapiens (Human).